The sequence spans 107 residues: Ig kappa chain V-VI region SAPC 10 (107 aa).

Residues 1-23 (EIVLTQSPAITAASLGQKVTITC) form a framework-1 region. A disulfide bond links C23 and C87. Residues 24-33 (SASSSVSYMH) form a complementarity-determining-1 region. Residues 34–48 (WYQQKSGTSPKPWIY) form a framework-2 region. The segment at 49–55 (EISKLAS) is complementarity-determining-2. The segment at 56 to 87 (GVPARFSGSGSGTSYSLTISSMEAEDAAIYYC) is framework-3. Positions 88 to 96 (QQWNYPLIT) are complementarity-determining-3. Positions 97–106 (FGGGTKLEIK) are framework-4.

This chain is Ig kappa chain V-VI region SAPC 10, found in Mus musculus (Mouse).